We begin with the raw amino-acid sequence, 172 residues long: Peptidyl-prolyl cis-trans isomerase (172 aa).

One can recognise a PPIase cyclophilin-type domain in the interval 7–170 (FFDMSVGGQP…KKVVVEDCGQ (164 aa)).

This sequence belongs to the cyclophilin-type PPIase family. Post-translationally, not glycosylated. In terms of tissue distribution, expressed in pollen.

It localises to the cytoplasm. The enzyme catalyses [protein]-peptidylproline (omega=180) = [protein]-peptidylproline (omega=0). Binds cyclosporin A (CsA). CsA mediates some of its effects via an inhibitory action on PPIase. Functionally, PPIases accelerate the folding of proteins. It catalyzes the cis-trans isomerization of proline imidic peptide bonds in oligopeptides. The sequence is that of Peptidyl-prolyl cis-trans isomerase (PCKR1) from Catharanthus roseus (Madagascar periwinkle).